Reading from the N-terminus, the 767-residue chain is Protein SQS1 (767 aa).

A compositionally biased stretch (basic residues) spans 1–17 (MAKRHSHYQGSRRRHAR). Residues 1 to 60 (MAKRHSHYQGSRRRHARGSNSKKAGRGNAKGIQGRKIKKKPTPTNSWHNSSIPLGEGDLD) are disordered. Over residues 42 to 52 (TPTNSWHNSSI) the composition is skewed to polar residues. A Phosphoserine modification is found at Ser105. The span at 176 to 185 (EDSENEDDDS) shows a compositional bias: acidic residues. Residues 176 to 200 (EDSENEDDDSQNSPSTDHSLSSNES) form a disordered region. Phosphoserine is present on residues Ser217, Ser255, Ser334, Ser343, and Ser345. Residues 466–493 (YSDIPISDSSDEGDSYEGDSYEDDEDMA) are disordered. Over residues 474–492 (SSDEGDSYEGDSYEDDEDM) the composition is skewed to acidic residues. An R3H domain is found at 594–656 (GLHIQNIKDE…HTSVVVEKIK (63 aa)). One can recognise a G-patch domain in the interval 720–767 (NENIGRRMLEKLGWKSGEGLGIQGNKGISEPIFAKIKKNRSGLRHSES).

The protein belongs to the SQS1 family.

It is found in the cytoplasm. It localises to the nucleus. In terms of biological role, may be involved in splicing since overexpression antagonizes the suppression of splicing defects by SPP382 mutants. The chain is Protein SQS1 (SQS1) from Saccharomyces cerevisiae (strain YJM789) (Baker's yeast).